We begin with the raw amino-acid sequence, 130 residues long: Protein ApaG (130 aa).

The region spanning 3–127 is the ApaG domain; that stretch reads SAVTRGIEVT…FSLDVPEQRR (125 aa).

This Brucella suis biovar 1 (strain 1330) protein is Protein ApaG.